Consider the following 370-residue polypeptide: Phosphate acyltransferase (370 aa).

A disordered region spans residues 349-370 (SAGRAGQDAPDEMAAPGRSEKR).

The protein belongs to the PlsX family. In terms of assembly, homodimer. Probably interacts with PlsY.

It localises to the cytoplasm. It catalyses the reaction a fatty acyl-[ACP] + phosphate = an acyl phosphate + holo-[ACP]. The protein operates within lipid metabolism; phospholipid metabolism. Its function is as follows. Catalyzes the reversible formation of acyl-phosphate (acyl-PO(4)) from acyl-[acyl-carrier-protein] (acyl-ACP). This enzyme utilizes acyl-ACP as fatty acyl donor, but not acyl-CoA. The protein is Phosphate acyltransferase of Cereibacter sphaeroides (strain ATCC 17023 / DSM 158 / JCM 6121 / CCUG 31486 / LMG 2827 / NBRC 12203 / NCIMB 8253 / ATH 2.4.1.) (Rhodobacter sphaeroides).